The sequence spans 212 residues: MSSLTGKLIVIEGLEGAGKSTAVNLVVELLSQKKISTITTREPGGTRIGEILRSIIKNPEYNNVLDDRSELLLLYAARIQLIEQVIKPALNVGQWVIADRFELSTLAYQGGGRKMNMRVINELSNFCLKGFKPDLTLYLDINPELGMIRAKSRGKFDRIEQESIEFFHRIHDTYHVLVKQNPEIMMIDANRSLDEVQSSIQSVIEEFIEHNL.

13 to 20 (GLEGAGKS) is an ATP binding site.

This sequence belongs to the thymidylate kinase family.

It catalyses the reaction dTMP + ATP = dTDP + ADP. Its function is as follows. Phosphorylation of dTMP to form dTDP in both de novo and salvage pathways of dTTP synthesis. The sequence is that of Thymidylate kinase from Legionella pneumophila (strain Paris).